Consider the following 123-residue polypeptide: Putative C-type lectin protein FPV003/FPV258 (123 aa).

Residues 21–122 (CRGPYTSYNN…CNATYGFVCI (102 aa)) enclose the C-type lectin domain.

This Fowlpox virus (strain NVSL) (FPV) protein is Putative C-type lectin protein FPV003/FPV258.